The chain runs to 1132 residues: MEKESVYNLALKCAERQLTSMEFSNLYKEFFNEKFPSLIQEEEEDTTTTANINEVKKASDLVDTPSNNTAATADTTHLHEALDIVCSDFVKILNLEKPLILADYIVEVLLVNYNSDMIKCFLPKLNSVRNSLLLAHFFSKSCSFFAKLSDTLIIDQVRKDLGNVIVPNILSLDMNSMNKELIAIVSKLLQTTLKLSPSPILLTSAGCKNGSFTLLNQLSQTNKLLFKRVSQTFEAKLHFKDTKPFLNKDSTNEFVGSPSLTSPQYIPSPLSSTKPPGSVNSAAKYKDMKLLRYYKNIWLNNKIINWEISNPDFLSKYSAITSSIFQESFNSVQNLDQLLTDLIETSFTCFAQFVSNKQYHQANSNLTLLERKWVIFITKHLPLLILENSSRSPRVVTNALDNIDEKVVKAIRIYFTEKDDNKTNNEDLFDDYPSTSLDIRHDFIKGLIMLNLQPASVINNYLREDQMIDTSILPTRDDLFVRNLQGIQEVVHNTNSFIISSLDTLELESITESITHDSSNGLFQVLHNFESVAPTKQREIVKAFLSIFEDAIKELNYNRIAKICALLFFNFSHSLTTILSFSSPAALMKTLIKFVDLSRNGRNGSNGNDESSEYETINISLSFSWAILLIINLTQTYGISVVDVALKYPELSIKNSFIINFISNLPNVSDKYYLEESNVNDSDMLTKSHNTVQSWLCDLFVNGSITDQLIQNIETRQLANLIPFIVKQVLLSVEIGVLTDISSLIGGFEYFLQPLLLVGLIKTFYWLEQFLSCVKNDTISEDILQGIFNLLNTLFNPVTLNEDSKAFHTAVLRLNAIPLLKVLRKFRVQSQSNYGIYSSDAQGDPNLEPLIAKLVAVLNVSPVYDVDPRIINSENDYSRKQLGYGKFLILNENPINKIMTNQINSFWSLHSSTYYNLDYLFELIELVTPKSFLFDVLKTLEYKLATYGVPGSENKRGSLDSEHVFDYFFYFLVLYDVKTAEEASQLIEYMENDAKKSKGDVDIKGEDLHEKNDSAEVRQETQPKAEATQDDDFDMLFGENDTSTQAYEEEEENEDNDGNNRTNNVPMIKAEETPSKTNKISILKRHSFAVLLHERKLLNDLALENGEITKTENEKFISYHDKYLCMLKTCVF.

A compositionally biased stretch (basic and acidic residues) spans 998 to 1023; it reads KGDVDIKGEDLHEKNDSAEVRQETQP. Residues 998 to 1070 are disordered; it reads KGDVDIKGED…RTNNVPMIKA (73 aa). A compositionally biased stretch (acidic residues) spans 1047–1057; it reads YEEEEENEDND.

Belongs to the Mediator complex subunit 5 family. In terms of assembly, component of the Mediator complex, which is composed of at least 21 subunits that form three structurally distinct submodules. The Mediator head module contains MED6, MED8, MED11, SRB4/MED17, SRB5/MED18, ROX3/MED19, SRB2/MED20 and SRB6/MED22, the middle module contains MED1, MED4, NUT1/MED5, MED7, CSE2/MED9, NUT2/MED10, SRB7/MED21 and SOH1/MED31, and the tail module contains MED2, PGD1/MED3, RGR1/MED14, GAL11/MED15 and SIN4/MED16. The head and the middle modules interact directly with RNA polymerase II, whereas the elongated tail module interacts with gene-specific regulatory proteins.

The protein localises to the nucleus. Component of the Mediator complex, a coactivator involved in the regulated transcription of nearly all RNA polymerase II-dependent genes. Mediator functions as a bridge to convey information from gene-specific regulatory proteins to the basal RNA polymerase II transcription machinery. The Mediator complex, having a compact conformation in its free form, is recruited to promoters by direct interactions with regulatory proteins and serves for the assembly of a functional preinitiation complex with RNA polymerase II and the general transcription factors. The Mediator complex unfolds to an extended conformation and partially surrounds RNA polymerase II, specifically interacting with the unphosphorylated form of the C-terminal domain (CTD) of RNA polymerase II. The Mediator complex dissociates from the RNA polymerase II holoenzyme and stays at the promoter when transcriptional elongation begins. This Saccharomyces cerevisiae (strain ATCC 204508 / S288c) (Baker's yeast) protein is Mediator of RNA polymerase II transcription subunit 5 (NUT1).